The following is a 1282-amino-acid chain: Ribosome biogenesis protein BMS1 homolog (1282 aa).

Positions 1 to 24 (MEAKDQKKHRKKNSGPKAAKKKKR) are enriched in basic residues. Residues 1 to 43 (MEAKDQKKHRKKNSGPKAAKKKKRLLQDLQLGDEEDARKRNPK) are disordered. K43 is covalently cross-linked (Glycyl lysine isopeptide (Lys-Gly) (interchain with G-Cter in SUMO2)). The Bms1-type G domain occupies 80–245 (PPPIVVVVMG…GRFITVMKFR (166 aa)). The tract at residues 89 to 96 (GPPKVGKS) is G1. Residue 89 to 96 (GPPKVGKS) participates in ATP binding. The interval 117 to 121 (PVTIV) is G2. Positions 132-135 (ECGC) are G3. A G4 region spans residues 184-187 (THLD). Residue S188 is modified to Phosphoserine. A G5 region spans residues 219 to 228 (LSGMVHGEYQ). 2 disordered regions span residues 397–557 (DSKP…ANCQ) and 575–667 (PTFD…ALKW). Residues K399 and K415 each participate in a glycyl lysine isopeptide (Lys-Gly) (interchain with G-Cter in SUMO2) cross-link. 2 stretches are compositionally biased toward acidic residues: residues 434–472 (GDEDESGDSDDEEDDEMSEDDGLENGSSDEEAEEEENAE) and 503–531 (DSDDDLERSSAEEGEAEEADESSEEEDCT). Residues 535–550 (KGISGSKAAGEGSKAG) are compositionally biased toward low complexity. Position 552 is a phosphoserine (S552). Residues 588–610 (FASEDESEESSSLSAEEEDSENE) show a composition bias toward acidic residues. 2 positions are modified to phosphoserine: S625 and S639. K646 is covalently cross-linked (Glycyl lysine isopeptide (Lys-Gly) (interchain with G-Cter in SUMO2)). The span at 653–667 (EENNDSKETSGALKW) shows a compositional bias: basic and acidic residues. T708 carries the post-translational modification Phosphothreonine. Disordered stretches follow at residues 787–822 (ETGDVHKGKSGPNTQNEDIEKEVKEEIDPDEEESAK) and 1178–1202 (NKPKTQAKAGKVPKDRRRPAVIREP). K810 participates in a covalent cross-link: Glycyl lysine isopeptide (Lys-Gly) (interchain with G-Cter in SUMO1); alternate. K810 is covalently cross-linked (Glycyl lysine isopeptide (Lys-Gly) (interchain with G-Cter in SUMO2); alternate). K1206 is covalently cross-linked (Glycyl lysine isopeptide (Lys-Gly) (interchain with G-Cter in SUMO2)). The interval 1219–1282 (SQKMKKAKEQ…SLKGAEGQLQ (64 aa)) is disordered. A compositionally biased stretch (basic and acidic residues) spans 1228 to 1248 (QRHLHNKEHFRAKQKEEEEKL). Basic residues predominate over residues 1249–1259 (KRQKDLRKKLF).

Belongs to the TRAFAC class translation factor GTPase superfamily. Bms1-like GTPase family. BMS1 subfamily. Part of the small subunit (SSU) processome, composed of more than 70 proteins and the RNA chaperone small nucleolar RNA (snoRNA) U3. Interacts with RCL1.

It localises to the nucleus. Its subcellular location is the nucleolus. It carries out the reaction GTP + H2O = GDP + phosphate + H(+). Functionally, GTPase required for the synthesis of 40S ribosomal subunits and for processing of pre-ribosomal RNA (pre-rRNA) at sites A0, A1, and A2. Controls access of pre-rRNA intermediates to RCL1 during ribosome biogenesis by binding RCL1 in a GTP-dependent manner, and delivering it to pre-ribosomes. GTP-binding and/or GTP hydrolysis may induce conformational rearrangements within the BMS1-RCL1 complex allowing the interaction of RCL1 with its RNA substrate. Required for RCL1 import into the nucleus. The sequence is that of Ribosome biogenesis protein BMS1 homolog from Homo sapiens (Human).